The chain runs to 200 residues: Phospholipase A2 inhibitor gamma subunit B (200 aa).

Positions Met1–Cys19 are cleaved as a signal peptide. 8 disulfides stabilise this stretch: Cys22/Cys46, Cys25/Cys32, Cys39/Cys67, Cys73/Cys94, Cys95/Cys100, Cys120/Cys145, Cys138/Cys165, and Cys171/Cys191.

Belongs to the CNF-like-inhibitor family. As to quaternary structure, heteromer composed of subunit A and subunit B.

Its subcellular location is the secreted. Functionally, inhibits the enzymatic activity of the phospholipase A2 (PLA2). This is Phospholipase A2 inhibitor gamma subunit B from Elaphe climacophora (Japanese rat snake).